The following is a 184-amino-acid chain: Potassium-transporting ATPase KdpC subunit (184 aa).

The helical transmembrane segment at 6-26 (TAVLYTIISAVFLGLGYPLIM) threads the bilayer.

It belongs to the KdpC family. In terms of assembly, the system is composed of three essential subunits: KdpA, KdpB and KdpC.

Its subcellular location is the cell inner membrane. Part of the high-affinity ATP-driven potassium transport (or Kdp) system, which catalyzes the hydrolysis of ATP coupled with the electrogenic transport of potassium into the cytoplasm. This subunit acts as a catalytic chaperone that increases the ATP-binding affinity of the ATP-hydrolyzing subunit KdpB by the formation of a transient KdpB/KdpC/ATP ternary complex. The chain is Potassium-transporting ATPase KdpC subunit from Acidobacterium capsulatum (strain ATCC 51196 / DSM 11244 / BCRC 80197 / JCM 7670 / NBRC 15755 / NCIMB 13165 / 161).